The sequence spans 320 residues: uncharacterized protein (320 aa).

The 65-residue stretch at 22–86 (KTIGRSSSFD…IRDLNNKTGT (65 aa)) folds into the FHA domain. A disordered region spans residues 242-264 (TDTDTTEEKEEEEEKEEGDDEEG).

This is an uncharacterized protein from Saccharomyces cerevisiae (strain ATCC 204508 / S288c) (Baker's yeast).